The chain runs to 102 residues: Glutaredoxin 1 (102 aa).

Positions 1 to 96 (MNKAILHTII…KLLEGQPKKK (96 aa)) constitute a Glutaredoxin domain. C17 and C20 are oxidised to a cystine.

Belongs to the glutaredoxin family. As to quaternary structure, monomer.

It localises to the cytoplasm. Functionally, has a glutathione-disulfide oxidoreductase activity in the presence of NADPH and glutathione reductase. Reduces low molecular weight disulfides and proteins. This is Glutaredoxin 1 (grxC1) from Rickettsia felis (strain ATCC VR-1525 / URRWXCal2) (Rickettsia azadi).